The chain runs to 217 residues: Probable D-methionine transport system permease protein MetI (217 aa).

The ABC transmembrane type-1 domain maps to 13–207; it reads TLETLYMGFI…LIVMLSQKLG (195 aa). The next 5 helical transmembrane spans lie at 20-40, 58-78, 81-101, 143-163, and 184-204; these read GFIA…LAFL, VIIN…LLPF, LVVG…VSAI, IPIL…YSAM, and NMIY…MLSQ.

This sequence belongs to the binding-protein-dependent transport system permease family. CysTW subfamily.

It is found in the cell inner membrane. In terms of biological role, part of the binding-protein-dependent transport system for D-methionine. Probably responsible for the translocation of the substrate across the membrane. The protein is Probable D-methionine transport system permease protein MetI (metI) of Pasteurella multocida (strain Pm70).